A 229-amino-acid polypeptide reads, in one-letter code: Ribosomal RNA small subunit methyltransferase G (229 aa).

Residues Gly-71, 122 to 123, and Arg-139 each bind S-adenosyl-L-methionine; that span reads AE.

It belongs to the methyltransferase superfamily. RNA methyltransferase RsmG family.

It localises to the cytoplasm. In terms of biological role, specifically methylates the N7 position of a guanine in 16S rRNA. The protein is Ribosomal RNA small subunit methyltransferase G of Thermotoga neapolitana (strain ATCC 49049 / DSM 4359 / NBRC 107923 / NS-E).